The chain runs to 334 residues: Phosphatidylglycerol--prolipoprotein diacylglyceryl transferase (334 aa).

Transmembrane regions (helical) follow at residues 22–42, 54–74, 105–125, and 131–151; these read FLPF…VVAA, AEPG…IIGA, IWEG…GVGI, and GLRF…AQAI. A 1,2-diacyl-sn-glycero-3-phospho-(1'-sn-glycerol) is bound at residue Arg153. 2 helical membrane passes run 191-211 and 251-271; these read LFQP…FVIL and FLGI…GAII. Positions 296–334 are disordered; it reads PQAEVESGETDPEEILHADDDEERTGTHKPQATSLSGSN. Residues 301–318 show a composition bias toward acidic residues; the sequence is ESGETDPEEILHADDDEE. Over residues 323 to 334 the composition is skewed to polar residues; sequence HKPQATSLSGSN.

Belongs to the Lgt family.

The protein resides in the cell membrane. The enzyme catalyses L-cysteinyl-[prolipoprotein] + a 1,2-diacyl-sn-glycero-3-phospho-(1'-sn-glycerol) = an S-1,2-diacyl-sn-glyceryl-L-cysteinyl-[prolipoprotein] + sn-glycerol 1-phosphate + H(+). It participates in protein modification; lipoprotein biosynthesis (diacylglyceryl transfer). Its function is as follows. Catalyzes the transfer of the diacylglyceryl group from phosphatidylglycerol to the sulfhydryl group of the N-terminal cysteine of a prolipoprotein, the first step in the formation of mature lipoproteins. The protein is Phosphatidylglycerol--prolipoprotein diacylglyceryl transferase of Leifsonia xyli subsp. xyli (strain CTCB07).